The following is a 5762-amino-acid chain: Mucin-5B (5762 aa).

A signal peptide spans 1 to 25 (MGAPSACRTLVLALAAMLVVPQAET). A disordered region spans residues 27 to 50 (GPVEPSWENAGHTMDGGAPTSSPT). In terms of domain architecture, VWFD 1 spans 75 to 245 (RVCSTWGDFH…KLDGPTEQCP (171 aa)). 2 cysteine pairs are disulfide-bonded: Cys-77–Cys-207 and Cys-99–Cys-244. N-linked (GlcNAc...) asparagine glycosylation occurs at Asn-145. Glu-194 provides a ligand contact to Cu(2+). 2 N-linked (GlcNAc...) asparagine glycosylation sites follow: Asn-201 and Asn-254. His-311 and His-358 together coordinate Cu(2+). Residues 329 to 385 (CPLNMQHQECGSPCTDTCSNPQRAQLCEDHCVDGCFCPPGTVLDDITHSGCLPLGQC) enclose the TIL 1 domain. Asn-401 carries N-linked (GlcNAc...) asparagine glycosylation. One can recognise a VWFD 2 domain in the interval 423-598 (GTCSVQGGAH…NTWKAQAACA (176 aa)). Cystine bridges form between Cys-425–Cys-562, Cys-447–Cys-597, and Cys-469–Cys-477. A glycan (N-linked (GlcNAc...) asparagine) is linked at Asn-515. TIL domains are found at residues 695-752 (CPKS…AQEC) and 805-855 (NSSA…EEDC). N-linked (GlcNAc...) asparagine glycosylation occurs at Asn-805. In terms of domain architecture, VWFC 1 spans 855 to 927 (CPCVHNEATY…EYILAQDYCG (73 aa)). Residues 893-1062 (GTCVAYGDGH…NSWKLSPSCP (170 aa)) enclose the VWFD 3 domain. Disulfide bonds link Cys-895–Cys-1026, Cys-917–Cys-1061, Cys-926–Cys-1023, and Cys-944–Cys-951. Residue Asn-929 is glycosylated (N-linked (GlcNAc...) asparagine). Residues Asn-1276 and Asn-1292 are each glycosylated (N-linked (GlcNAc...) asparagine). The Cys-rich subdomain 1 repeat unit spans residues 1333-1432 (CVREVCRWSS…RVLCCEYVPC (100 aa)). The 7 X Cys-rich subdomain repeats stretch occupies residues 1333–4228 (CVREVCRWSS…RVFCCNYGHC (2896 aa)). A C-linked (Man) tryptophan glycan is attached at Trp-1340. Disordered stretches follow at residues 1437 to 1462 (APGT…QTTA) and 1480 to 1502 (LTSQ…GTTT). The span at 1450–1462 (TEPAVPTPTQTTA) shows a compositional bias: low complexity. The Cys-rich subdomain 2 repeat unit spans residues 1503–1604 (CQPRCQWTEW…VLCCSDDHCR (102 aa)). A C-linked (Man) tryptophan glycan is attached at Trp-1509. A glycan (N-linked (GlcNAc...) asparagine) is linked at Asn-1556. The disordered stretch occupies residues 1607–1783 (ATTPPPTTEL…NTTTSQGTTR (177 aa)). Over residues 1614-1624 (TELETATTTTT) the composition is skewed to low complexity. 2 stretches are compositionally biased toward polar residues: residues 1625-1638 (QALF…SSPG) and 1645-1662 (ASTT…SPRY). Over residues 1663 to 1684 (TSTLGTATTGGPTTPAGSTEPT) the composition is skewed to low complexity. Over residues 1689–1706 (ATSTLPTRSALPGTTGSL) the composition is skewed to polar residues. 2 stretches are compositionally biased toward low complexity: residues 1739–1756 (EPLT…LSTS) and 1765–1777 (TETT…NTTT). A glycan (N-linked (GlcNAc...) asparagine) is linked at Asn-1774. The stretch at 1784–1885 (CQPKCEWTEW…VLCCDDYSHC (102 aa)) is one Cys-rich subdomain 3 repeat. A C-linked (Man) tryptophan glycan is attached at Trp-1790. Residues 1890 to 1987 (ATSSTATPSS…TSVTPIPSSS (98 aa)) show a composition bias toward low complexity. 4 disordered regions span residues 1890 to 2019 (ATSS…TAHT), 2031 to 2100 (GATG…GTTH), 2114 to 2211 (TGSM…HTVR), and 2242 to 2302 (TGTT…SSPT). The 11 X approximate tandem repeats, Ser/Thr-rich stretch occupies residues 1890–2199 (ATSSTATPSS…VPNTMATTHG (310 aa)). Polar residues predominate over residues 1988 to 1997 (LGTTWTRLSQ). The span at 1998–2019 (TTTPTATMSTATPSSTPETAHT) shows a compositional bias: low complexity. Positions 2114-2181 (TGSMATPSSS…TSNTVTPSSA (68 aa)) are enriched in low complexity. Polar residues predominate over residues 2182-2199 (LGTTHTPPVPNTMATTHG). Residues 2313 to 2414 (GCEPQCAWSE…RVFCCNYGHC (102 aa)) form a Cys-rich subdomain 4 repeat. Trp-2320 carries a C-linked (Man) tryptophan glycan. The segment at 2419–2756 (ATSSTAMPSS…VPNTTATTHG (338 aa)) is 11 X approximate tandem repeats, Ser/Thr-rich. Disordered regions lie at residues 2443 to 2462 (ATTT…PGTT), 2473 to 2522 (TVTV…ATAL), and 2556 to 2861 (TTPT…PTSA). Residues 2556-2738 (TTPTATMSTA…TSSTVTPSSA (183 aa)) are compositionally biased toward low complexity. Over residues 2739–2786 (LGTTHTPPVPNTTATTHGRSLSPSSPHTVRTAWTSATSGTLGTTHITE) the composition is skewed to polar residues. An N-linked (GlcNAc...) asparagine glycan is attached at Asn-2749. The segment covering 2787 to 2861 (PSTGTSHTPA…TLLPSSPTSA (75 aa)) has biased composition (low complexity). One copy of the HAT 1 repeat lies at 2854–2886 (LPSSPTSAPITTVVTMGCEPQCAWSEWLDYSYP). A Cys-rich subdomain 5 repeat occupies 2871–2971 (CEPQCAWSEW…RVFCCNYGHC (101 aa)). Trp-2877 carries a C-linked (Man) tryptophan glycan. A 17 X approximate tandem repeats, Ser/Thr-rich region spans residues 2976 to 3456 (ATSSTATPSS…VPNTTATTHG (481 aa)). Low complexity-rich tracts occupy residues 3001–3017 (TTTA…STPG) and 3026–3049 (TSTA…RTAT). Disordered regions lie at residues 3001–3049 (TTTA…RTAT), 3256–3357 (TTPT…GTTH), 3371–3469 (TGSM…TVRT), and 3481–3561 (TTHI…PTSA). Residues 3371 to 3438 (TGSMATPSSS…TSSTVTPSSA (68 aa)) are compositionally biased toward low complexity. The segment covering 3439–3456 (LGTTHTPPVPNTTATTHG) has biased composition (polar residues). Residue Asn-3449 is glycosylated (N-linked (GlcNAc...) asparagine). A compositionally biased stretch (low complexity) spans 3487-3561 (PSTVTSHTPA…TLLPSSPTSA (75 aa)). One copy of the HAT 2 repeat lies at 3554 to 3586 (LPSSPTSAPITTVVTTGCEPQCAWSEWLDYSYP). One copy of the Cys-rich subdomain 6 repeat lies at 3571 to 3671 (CEPQCAWSEW…RVFCCNYGHC (101 aa)). Trp-3577 carries C-linked (Man) tryptophan glycosylation. Residues 3676-4013 (ATSSTATPSS…VPNTTATTHG (338 aa)) are 11 X approximate tandem repeats, Ser/Thr-rich. Disordered stretches follow at residues 3699 to 3779 (TATT…ATAL), 3813 to 3917 (TTPT…HTPT), and 3956 to 4118 (ATGS…PTSA). The span at 3956 to 3995 (ATGSTTNPSSTPGTTPIPPVLTTTATTPAATSSTVTPSSA) shows a compositional bias: low complexity. Residues 3996-4043 (LGTTHTPPVPNTTATTHGRSLSPSSPHTVRTAWTSATSGTLGTTHITE) are compositionally biased toward polar residues. An N-linked (GlcNAc...) asparagine glycan is attached at Asn-4006. The span at 4044-4118 (PSTGTSHTPA…TLLPSSPTSA (75 aa)) shows a compositional bias: low complexity. The stretch at 4111-4143 (LPSSPTSAPITTVVTTGCEPQCAWSEWLDYSYP) is one HAT 3 repeat. Residues 4128–4228 (CEPQCAWSEW…RVFCCNYGHC (101 aa)) form a Cys-rich subdomain 7 repeat. Trp-4134 carries C-linked (Man) tryptophan glycosylation. The 23 X approximate tandem repeats, Ser/Thr-rich stretch occupies residues 4233–4879 (ATSSTAMPSS…TLGTAHTPKV (647 aa)). Low complexity-rich tracts occupy residues 4259 to 4274 (TTAS…STPG) and 4283 to 4389 (TSPA…PGTT). 4 disordered regions span residues 4259–4389 (TTAS…PGTT), 4428–4447 (ATTT…PGTT), 4458–4527 (TVTV…AIPS), and 4541–4750 (TTPT…ATSF). Asn-4804, Asn-4960, Asn-5017, Asn-5024, Asn-5046, Asn-5096, and Asn-5111 each carry an N-linked (GlcNAc...) asparagine glycan. The region spanning 5073 to 5261 (CICSMWGGSH…VPDSRKDGCW (189 aa)) is the VWFD 4 domain. 3 cysteine pairs are disulfide-bonded: Cys-5075–Cys-5221, Cys-5097–Cys-5260, and Cys-5121–Cys-5132. N-linked (GlcNAc...) asparagine glycosylation is present at Asn-5215. The 73-residue stretch at 5412 to 5484 (CPCVGPDGFP…NPCCPETVCV (73 aa)) folds into the VWFC 2 domain. N-linked (GlcNAc...) asparagine glycans are attached at residues Asn-5486, Asn-5526, Asn-5565, Asn-5566, Asn-5602, Asn-5612, Asn-5663, Asn-5677, and Asn-5721. One can recognise a VWFC 3 domain in the interval 5521 to 5587 (QLCSYNGTFY…VAGQCCGECV (67 aa)). Cystine bridges form between Cys-5653/Cys-5705, Cys-5672/Cys-5719, Cys-5681/Cys-5735, and Cys-5685/Cys-5737. Positions 5653–5742 (CEEDSCQVRI…DECGCTPFCV (90 aa)) constitute a CTCK domain.

Homomultimer; disulfide-linked. The N- and C-terminus mediate their assembly into higher order structures to form filaments. The CTCK domains of two polypeptides associate in the endoplasmic reticulum to generate intermolecularly disulfide-bonded dimers. These dimers progress to the Golgi apparatus, which is a more acidic environment than the endoplasmic reticulum. Under acidic conditions, the N-termini form non-covalent intermolecular interactions that juxtapose assemblies from different CTCK-linked dimers to produce long, disulfide-linked polymers that remain highly compact until secretion. Post-translationally, highly glycosylated. C-, N- and O-glycosylated. C-mannosylated in the Cys-rich subdomains probably on the first Trp residue of the WXXW motif. Highly O-glycosylated in the Ser/Thr-rich tandem repeat (TR) region. The repeat region is about 59% O-glycosylated with a high abundance of NeuAc(2)Hex(1)HexNac1-ol. In terms of tissue distribution, expressed on surface airway epithelia. Expressed mainly in mucous cells of submucosal glands of airway tissues. Highly expressed in the sublingual gland. Also found in submaxillary glands, endocervix, gall bladder, and pancreas.

It localises to the secreted. Gel-forming mucin that is thought to contribute to the lubricating and viscoelastic properties of whole saliva and cervical mucus. This chain is Mucin-5B (MUC5B), found in Homo sapiens (Human).